The primary structure comprises 756 residues: Inhibitor of nuclear factor kappa-B kinase subunit beta (756 aa).

Positions 15–300 (WEMKERLGTG…DPVYGPNGCF (286 aa)) constitute a Protein kinase domain. Residues 21 to 29 (LGTGGFGNV) and Lys-44 contribute to the ATP site. The active-site Proton acceptor is the Asp-145. A Glycyl lysine isopeptide (Lys-Gly) (interchain with G-Cter in ubiquitin) cross-link involves residue Lys-163. The residue at position 177 (Ser-177) is a Phosphoserine; by TBK1 and PKC/PRKCZ. An S-nitrosocysteine modification is found at Cys-179. A Phosphoserine; by TBK1, PKC/PRKCZ and PDPK1 modification is found at Ser-181. A Hydroxyproline modification is found at Pro-191. The tract at residues 458–479 (LLRNNSCLSKMKNSMASMSQQL) is leucine-zipper. Residues Ser-670, Ser-672, Ser-675, Ser-682, Ser-689, Ser-697, Ser-705, Ser-733, and Ser-740 each carry the phosphoserine; by autocatalysis modification. An NEMO-binding region spans residues 737-742 (LDWSWL).

It belongs to the protein kinase superfamily. Ser/Thr protein kinase family. I-kappa-B kinase subfamily. As to quaternary structure, component of the I-kappa-B-kinase (IKK) core complex consisting of CHUK, IKBKB and IKBKG; probably four alpha/CHUK-beta/IKBKB dimers are associated with four gamma/IKBKG subunits. The IKK core complex seems to associate with regulatory or adapter proteins to form a IKK-signalosome holo-complex. The IKK complex associates with TERF2IP/RAP1, leading to promote IKK-mediated phosphorylation of RELA/p65. Part of a complex composed of NCOA2, NCOA3, CHUK/IKKA, IKBKB, IKBKG and CREBBP. Part of a 70-90 kDa complex at least consisting of CHUK/IKKA, IKBKB, NFKBIA, RELA, ELP1 and MAP3K14. Found in a membrane raft complex, at least composed of BCL10, CARD11, DPP4 and IKBKB. Interacts with SQSTM1 through PRKCZ or PRKCI. Forms an NGF-induced complex with IKBKB, PRKCI and TRAF6. May interact with MAVS/IPS1. Interacts with NALP2. Interacts with TICAM1. Interacts with FAF1; the interaction disrupts the IKK complex formation. Interacts with ATM. Part of a ternary complex consisting of TANK, IKBKB and IKBKG. Interacts with NIBP; the interaction is direct. Interacts with ARRB1 and ARRB2. Interacts with TRIM21. Interacts with NLRC5; prevents IKBKB phosphorylation and kinase activity. Interacts with PDPK1. Interacts with EIF2AK2/PKR. The phosphorylated form interacts with PPM1A and PPM1B. Interacts with ZNF268; the interaction is further increased in a TNF-alpha-dependent manner. Interacts with IKBKE. Interacts with ZC3H12A. Interacts with AKAP13. Interacts with IFIT5; the interaction synergizes the recruitment of IKK to MAP3K7 and enhances IKK phosphorylation. Interacts with LRRC14; disrupts IKBKB-IKBKG interaction preventing I-kappa-B-kinase (IKK) core complex formation and leading to a decrease of IKBKB phosphorylation and NF-kappaB activation. Interacts with SASH1. Interacts with ARFIP2. Interacts with FKBP5. Post-translationally, upon cytokine stimulation, phosphorylated on Ser-177 and Ser-181 by MEKK1 and/or MAP3K14/NIK as well as TBK1 and PRKCZ; which enhances activity. Phosphorylated by MAP3K7/TAK1 in response to NOD1 and NOD2 signaling, promoting activation and phosphorylation of NF-kappa-B inhibitors, leading to NF-kappa-B activation. Once activated, autophosphorylates on the C-terminal serine cluster; which decreases activity and prevents prolonged activation of the inflammatory response. Phosphorylated by the IKK-related kinases TBK1 and IKBKE, which is associated with reduced CHUK/IKKA and IKBKB activity and NF-kappa-B-dependent gene transcription. Dephosphorylated at Ser-177 and Ser-181 by PPM1A and PPM1B. In terms of processing, ubiquitinated. Monoubiquitination involves TRIM21 that leads to inhibition of Tax-induced NF-kappa-B signaling. 'Ser-163' may not serve as a monoubiquitination site. Ubiquitination on 'Ser-163' may modulate phosphorylation on C-terminal serine residues. Hydroxylated by PHD1/EGLN2, loss of hydroxylation under hypoxic conditions results in activation of NF-kappa-B.

It is found in the cytoplasm. It localises to the nucleus. Its subcellular location is the membrane raft. It carries out the reaction L-seryl-[I-kappa-B protein] + ATP = O-phospho-L-seryl-[I-kappa-B protein] + ADP + H(+). The enzyme catalyses L-seryl-[protein] + ATP = O-phospho-L-seryl-[protein] + ADP + H(+). The catalysed reaction is L-threonyl-[protein] + ATP = O-phospho-L-threonyl-[protein] + ADP + H(+). Its function is as follows. Serine kinase that plays an essential role in the NF-kappa-B signaling pathway which is activated by multiple stimuli such as inflammatory cytokines, bacterial or viral products, DNA damages or other cellular stresses. Acts as a part of the canonical IKK complex in the conventional pathway of NF-kappa-B activation. Phosphorylates inhibitors of NF-kappa-B on 2 critical serine residues. These modifications allow polyubiquitination of the inhibitors and subsequent degradation by the proteasome. In turn, free NF-kappa-B is translocated into the nucleus and activates the transcription of hundreds of genes involved in immune response, growth control, or protection against apoptosis. In addition to the NF-kappa-B inhibitors, phosphorylates several other components of the signaling pathway including NEMO/IKBKG, NF-kappa-B subunits RELA and NFKB1, as well as IKK-related kinases TBK1 and IKBKE. IKK-related kinase phosphorylations may prevent the overproduction of inflammatory mediators since they exert a negative regulation on canonical IKKs. Phosphorylates FOXO3, mediating the TNF-dependent inactivation of this pro-apoptotic transcription factor. Also phosphorylates other substrates including NAA10, NCOA3, BCL10 and IRS1. Phosphorylates RIPK1 at 'Ser-25' which represses its kinase activity and consequently prevents TNF-mediated RIPK1-dependent cell death. Phosphorylates the C-terminus of IRF5, stimulating IRF5 homodimerization and translocation into the nucleus. The polypeptide is Inhibitor of nuclear factor kappa-B kinase subunit beta (IKBKB) (Bos taurus (Bovine)).